A 359-amino-acid polypeptide reads, in one-letter code: Peptide chain release factor 1 (359 aa).

Position 236 is an N5-methylglutamine (Q236).

This sequence belongs to the prokaryotic/mitochondrial release factor family. Methylated by PrmC. Methylation increases the termination efficiency of RF1.

The protein localises to the cytoplasm. Its function is as follows. Peptide chain release factor 1 directs the termination of translation in response to the peptide chain termination codons UAG and UAA. The sequence is that of Peptide chain release factor 1 from Streptococcus pyogenes serotype M1.